The chain runs to 1288 residues: 5-oxoprolinase (1288 aa).

T151 is modified (phosphothreonine). Positions 1249-1269 (GGGGYGDPEDPAPLPGSPLQP) are disordered. A Phosphoserine modification is found at S1265.

It belongs to the oxoprolinase family. As to quaternary structure, homodimer. As to expression, expressed in coronary artery and kidney.

The protein localises to the cytoplasm. It localises to the cytosol. It carries out the reaction 5-oxo-L-proline + ATP + 2 H2O = L-glutamate + ADP + phosphate + H(+). Functionally, catalyzes the cleavage of 5-oxo-L-proline to form L-glutamate coupled to the hydrolysis of ATP to ADP and inorganic phosphate. This chain is 5-oxoprolinase (OPLAH), found in Bos taurus (Bovine).